The following is a 61-amino-acid chain: Small ribosomal subunit protein uS14 (61 aa).

Positions 24, 27, 40, and 43 each coordinate Zn(2+).

This sequence belongs to the universal ribosomal protein uS14 family. Zinc-binding uS14 subfamily. In terms of assembly, part of the 30S ribosomal subunit. Contacts proteins S3 and S10. Zn(2+) is required as a cofactor.

Its function is as follows. Binds 16S rRNA, required for the assembly of 30S particles and may also be responsible for determining the conformation of the 16S rRNA at the A site. The sequence is that of Small ribosomal subunit protein uS14 from Pseudothermotoga lettingae (strain ATCC BAA-301 / DSM 14385 / NBRC 107922 / TMO) (Thermotoga lettingae).